The chain runs to 115 residues: Superoxide reductase (115 aa).

6 residues coordinate Fe cation: Glu14, His16, His41, His47, Cys102, and His105.

This sequence belongs to the desulfoferrodoxin family. Homotetramer. Requires Fe cation as cofactor.

The enzyme catalyses reduced [rubredoxin] + superoxide + 2 H(+) = oxidized [rubredoxin] + H2O2. Functionally, uses electrons from reduced NADP, by way of rubredoxin and an oxidoreductase, to catalyze the reduction of superoxide to hydrogen peroxide. This is Superoxide reductase (sorA) from Pyrococcus abyssi (strain GE5 / Orsay).